The following is a 414-amino-acid chain: HERV-H LTR-associating protein 2 (414 aa).

The signal sequence occupies residues 1-22 (MKAQTALSFFLILITSLSGSQG). One can recognise an Ig-like V-type 1 domain in the interval 61-131 (IHWKYQDSYK…YVGTAIQVIT (71 aa)). 2 N-linked (GlcNAc...) asparagine glycosylation sites follow: asparagine 90 and asparagine 103. Residues 138-222 (VGVFLTPVMK…ENSLLKQTWT (85 aa)) form the Ig-like C1-type domain. 2 disulfides stabilise this stretch: cysteine 159/cysteine 210 and cysteine 243/cysteine 317. Residues 235–328 (QSEHVSLSCQ…ISSDEYTLLT (94 aa)) form the Ig-like V-type 2 domain. An N-linked (GlcNAc...) asparagine glycan is attached at asparagine 318. Residues 345–365 (KGLWILVPSAILAAFLLIWSV) traverse the membrane as a helical segment. The disordered stretch occupies residues 383-414 (GAQQERCCVPPGERCPSAPDNGEENVPLSGKV).

Interacts with TMIGD2. Expressed at high levels in colon, kidney, testis, lung and pancreas, and at lower levels in small intestine, liver and skeletal muscle. In immune cells, highly expressed in B-cells, dendritic cells and macrophages. Not detected in T-cells.

Its subcellular location is the membrane. Through interaction with TMIGD2, costimulates T-cells in the context of TCR-mediated activation. Enhances T-cell proliferation and cytokine production via an AKT-dependent signaling cascade. This Homo sapiens (Human) protein is HERV-H LTR-associating protein 2 (HHLA2).